A 122-amino-acid chain; its full sequence is UPF0102 protein Dred_2035 (122 aa).

The protein belongs to the UPF0102 family.

The chain is UPF0102 protein Dred_2035 from Desulforamulus reducens (strain ATCC BAA-1160 / DSM 100696 / MI-1) (Desulfotomaculum reducens).